The following is a 103-amino-acid chain: Large ribosomal subunit protein bL21 (103 aa).

Belongs to the bacterial ribosomal protein bL21 family. Part of the 50S ribosomal subunit. Contacts protein L20.

Its function is as follows. This protein binds to 23S rRNA in the presence of protein L20. This is Large ribosomal subunit protein bL21 from Shewanella amazonensis (strain ATCC BAA-1098 / SB2B).